The following is a 579-amino-acid chain: L-arabinonate dehydratase (579 aa).

Cys59 contacts [2Fe-2S] cluster. Glu91 contributes to the Mg(2+) binding site. Cys127 lines the [2Fe-2S] cluster pocket. Mg(2+) is bound at residue Asp128. Cys200 lines the [2Fe-2S] cluster pocket. Glu453 contributes to the Mg(2+) binding site.

It belongs to the IlvD/Edd family. As to quaternary structure, homotetramer. Requires [2Fe-2S] cluster as cofactor. It depends on Mg(2+) as a cofactor.

The catalysed reaction is L-arabinonate = 2-dehydro-3-deoxy-L-arabinonate + H2O. It catalyses the reaction D-galactonate = 2-dehydro-3-deoxy-D-galactonate + H2O. The enzyme catalyses D-fuconate = 2-dehydro-3-deoxy-D-fuconate + H2O. It functions in the pathway carbohydrate metabolism. Functionally, catalyzes the dehydration of L-arabinonate to 2-dehydro-3-deoxy-L-arabinonate during L-arabinose degradation. Can also dehydrate D-galactonate and D-fuconate with good catalytic efficiency. Has weak activity with D-xylonate and D-gluconate. This Rhizobium leguminosarum bv. trifolii (strain WSM2304) protein is L-arabinonate dehydratase.